The sequence spans 498 residues: MGNKWRVLLIVLVLALGGVLAGCKGTDQSSAEGKAGPDSKVKLSWMAILYHQQPPKDRAIKEIEKLTNTELDITWVPDAVKEDRLNAALAAGNLPQIVTIQDIKNSSVMNAFRSGMFWEIGDYIKDYPNLNKMNKLINKNVTIDGKLYGIYRERPLSRQGIVIRKDWLDNLNLKTPKTLDELYEVAKAFTEDDPDKDGKDDTFGLADRNDLIYGAFKTIGSYEGMPTDWKESGGKFTPDFMTQEYKDTMNYMKKLRDNGYMNKDFPVTSKTQQQELFSQGKAGIYIGNMVDAVNLRDHASDKSMKLEIINRIKGPDGKERVWASGGHNGVFAFPKTSVKTEAELKRILAFFDRIAEEDVYSLMTYGIDGVHYNKGEDKTFTRKESQVKDWQTDIQPLSALIAIDKAYLKNTGDPLRTAYEELTEDNEKIIVSNPAESLYSASESERGDELKKIIDDATYKYMIGDITESQFDKEVEKWESSGGKQIIQEYEEAFKQAK.

The first 22 residues, 1–22 (MGNKWRVLLIVLVLALGGVLAG), serve as a signal peptide directing secretion. Cys23 is lipidated: N-palmitoyl cysteine. Cys23 carries S-diacylglycerol cysteine lipidation.

This sequence belongs to the bacterial solute-binding protein 1 family. In terms of assembly, the complex is probably composed of two ATP-binding proteins (MsmX), two transmembrane proteins (YtcP and YteP) and a solute-binding protein (YtcQ).

It localises to the cell membrane. Functionally, involved in pectin degradation. Part of the ABC transporter complex YtcQP-YteP involved in the uptake of polygalacturonan and rhamnogalacturonan type I. The sequence is that of Polygalacturonan/rhamnogalacturonan-binding protein YtcQ (ytcQ) from Bacillus subtilis (strain 168).